Consider the following 217-residue polypeptide: Peptidyl-tRNA hydrolase (217 aa).

TRNA is bound at residue Y14. Catalysis depends on H19, which acts as the Proton acceptor. Y64, N66, and N113 together coordinate tRNA. Residues M182 to G217 are disordered. The span at A202–G217 shows a compositional bias: low complexity.

This sequence belongs to the PTH family. In terms of assembly, monomer.

It is found in the cytoplasm. The enzyme catalyses an N-acyl-L-alpha-aminoacyl-tRNA + H2O = an N-acyl-L-amino acid + a tRNA + H(+). Its function is as follows. Hydrolyzes ribosome-free peptidyl-tRNAs (with 1 or more amino acids incorporated), which drop off the ribosome during protein synthesis, or as a result of ribosome stalling. In terms of biological role, catalyzes the release of premature peptidyl moieties from peptidyl-tRNA molecules trapped in stalled 50S ribosomal subunits, and thus maintains levels of free tRNAs and 50S ribosomes. This chain is Peptidyl-tRNA hydrolase, found in Roseiflexus sp. (strain RS-1).